We begin with the raw amino-acid sequence, 196 residues long: Thymidine kinase (196 aa).

ATP-binding positions include 9–16 (GTMNSGKS) and 85–88 (DEAQ). The active-site Proton acceptor is the E86. Zn(2+) contacts are provided by C143, C146, C180, and H183.

It belongs to the thymidine kinase family. Homotetramer.

It localises to the cytoplasm. The catalysed reaction is thymidine + ATP = dTMP + ADP + H(+). The polypeptide is Thymidine kinase (Streptococcus thermophilus (strain CNRZ 1066)).